Reading from the N-terminus, the 275-residue chain is 2-dehydro-3-deoxyphosphooctonate aldolase (275 aa).

The protein belongs to the KdsA family.

Its subcellular location is the cytoplasm. The enzyme catalyses D-arabinose 5-phosphate + phosphoenolpyruvate + H2O = 3-deoxy-alpha-D-manno-2-octulosonate-8-phosphate + phosphate. The protein operates within carbohydrate biosynthesis; 3-deoxy-D-manno-octulosonate biosynthesis; 3-deoxy-D-manno-octulosonate from D-ribulose 5-phosphate: step 2/3. It participates in bacterial outer membrane biogenesis; lipopolysaccharide biosynthesis. The polypeptide is 2-dehydro-3-deoxyphosphooctonate aldolase (Francisella tularensis subsp. mediasiatica (strain FSC147)).